Consider the following 102-residue polypeptide: MNHQPPPVSRIGWDDQKIMRTRRELDSVKAIMKENVQKIMERQGKLDDLVERAQRLEEASDVYVKCAVKIKREMSWKANSLRYGIIAVSSVSAFAGLAYSFL.

Residues 17 to 77 (KIMRTRRELD…VKIKREMSWK (61 aa)) form the v-SNARE coiled-coil homology domain.

The polypeptide is Synaptobrevin-like protein 5 (snb-5) (Caenorhabditis elegans).